A 120-amino-acid polypeptide reads, in one-letter code: Immunoglobulin kappa variable 2D-26 (120 aa).

The N-terminal stretch at methionine 1–alanine 20 is a signal peptide. Residues glutamate 21 to cysteine 43 form a framework-1 region. Positions glutamate 21–proline 120 constitute an Ig-like domain. Cysteine 43 and cysteine 113 are oxidised to a cystine. The segment at arginine 44–tyrosine 59 is complementarity-determining-1. Positions tryptophan 60–tyrosine 74 are framework-2. The interval glutamate 75 to serine 81 is complementarity-determining-2. Residues glycine 82–cysteine 113 are framework-3. The complementarity-determining-3 stretch occupies residues methionine 114 to proline 120.

Immunoglobulins are composed of two identical heavy chains and two identical light chains; disulfide-linked.

It localises to the secreted. Its subcellular location is the cell membrane. Functionally, v region of the variable domain of immunoglobulin light chains that participates in the antigen recognition. Immunoglobulins, also known as antibodies, are membrane-bound or secreted glycoproteins produced by B lymphocytes. In the recognition phase of humoral immunity, the membrane-bound immunoglobulins serve as receptors which, upon binding of a specific antigen, trigger the clonal expansion and differentiation of B lymphocytes into immunoglobulins-secreting plasma cells. Secreted immunoglobulins mediate the effector phase of humoral immunity, which results in the elimination of bound antigens. The antigen binding site is formed by the variable domain of one heavy chain, together with that of its associated light chain. Thus, each immunoglobulin has two antigen binding sites with remarkable affinity for a particular antigen. The variable domains are assembled by a process called V-(D)-J rearrangement and can then be subjected to somatic hypermutations which, after exposure to antigen and selection, allow affinity maturation for a particular antigen. The polypeptide is Immunoglobulin kappa variable 2D-26 (Homo sapiens (Human)).